A 427-amino-acid polypeptide reads, in one-letter code: Trigger factor (427 aa).

In terms of domain architecture, PPIase FKBP-type spans 163-248 (GDTVVIDFVG…IHEVKAKEVP (86 aa)).

This sequence belongs to the FKBP-type PPIase family. Tig subfamily.

The protein localises to the cytoplasm. The enzyme catalyses [protein]-peptidylproline (omega=180) = [protein]-peptidylproline (omega=0). In terms of biological role, involved in protein export. Acts as a chaperone by maintaining the newly synthesized protein in an open conformation. Functions as a peptidyl-prolyl cis-trans isomerase. The chain is Trigger factor from Streptococcus suis (strain 98HAH33).